Reading from the N-terminus, the 226-residue chain is Fibrillarin-like rRNA/tRNA 2'-O-methyltransferase (226 aa).

S-adenosyl-L-methionine contacts are provided by residues 85-86 (TT), 104-105 (EF), 129-130 (DA), and 149-152 (DVAQ).

This sequence belongs to the methyltransferase superfamily. Fibrillarin family. As to quaternary structure, interacts with nop5. Component of box C/D small ribonucleoprotein (sRNP) particles that contain rpl7ae, FlpA and nop5, plus a guide RNA.

Functionally, involved in pre-rRNA and tRNA processing. Utilizes the methyl donor S-adenosyl-L-methionine to catalyze the site-specific 2'-hydroxyl methylation of ribose moieties in rRNA and tRNA. Site specificity is provided by a guide RNA that base pairs with the substrate. Methylation occurs at a characteristic distance from the sequence involved in base pairing with the guide RNA. This Thermococcus gammatolerans (strain DSM 15229 / JCM 11827 / EJ3) protein is Fibrillarin-like rRNA/tRNA 2'-O-methyltransferase.